A 475-amino-acid polypeptide reads, in one-letter code: Ribulose bisphosphate carboxylase large chain (475 aa).

The propeptide occupies 1–2; it reads MS. P3 carries the N-acetylproline modification. Position 14 is an N6,N6,N6-trimethyllysine (K14). Residues N123 and T173 each contribute to the substrate site. Residue K175 is the Proton acceptor of the active site. K177 is a binding site for substrate. 3 residues coordinate Mg(2+): K201, D203, and E204. K201 bears the N6-carboxylysine mark. The active-site Proton acceptor is the H294. The substrate site is built by R295, H327, and S379.

This sequence belongs to the RuBisCO large chain family. Type I subfamily. Heterohexadecamer of 8 large chains and 8 small chains; disulfide-linked. The disulfide link is formed within the large subunit homodimers. It depends on Mg(2+) as a cofactor. The disulfide bond which can form in the large chain dimeric partners within the hexadecamer appears to be associated with oxidative stress and protein turnover.

It is found in the plastid. The protein resides in the chloroplast. The catalysed reaction is 2 (2R)-3-phosphoglycerate + 2 H(+) = D-ribulose 1,5-bisphosphate + CO2 + H2O. It carries out the reaction D-ribulose 1,5-bisphosphate + O2 = 2-phosphoglycolate + (2R)-3-phosphoglycerate + 2 H(+). In terms of biological role, ruBisCO catalyzes two reactions: the carboxylation of D-ribulose 1,5-bisphosphate, the primary event in carbon dioxide fixation, as well as the oxidative fragmentation of the pentose substrate in the photorespiration process. Both reactions occur simultaneously and in competition at the same active site. The chain is Ribulose bisphosphate carboxylase large chain from Castanea sativa (Sweet chestnut).